Reading from the N-terminus, the 33-residue chain is Brevinin-2CDYb (33 aa).

Cys27 and Cys33 are joined by a disulfide.

This sequence belongs to the frog skin active peptide (FSAP) family. Brevinin subfamily. As to expression, expressed by the skin glands.

It localises to the secreted. Its function is as follows. Antimicrobial peptide. This is Brevinin-2CDYb from Rana dybowskii (Dybovsky's frog).